A 100-amino-acid chain; its full sequence is Defensin-B4 (100 aa).

The N-terminal stretch at 1–22 is a signal peptide; sequence MRASLLLFILLVYLAHAPQAQG. The propeptide occupies 23 to 26; that stretch reads VFGP. Disulfide bonds link Cys-29-Cys-56, Cys-36-Cys-50, and Cys-40-Cys-57. The interval 60-100 is disordered; it reads STGTSSSQGSHEVPVINSEPALESKPEPQDTQEEEATMVSE. A compositionally biased stretch (acidic residues) spans 89–100; that stretch reads DTQEEEATMVSE.

This sequence belongs to the beta-defensin family. As to expression, highly expressed in kidney, lowly expressed in spleen, and expressed at lower levels in lung.

The protein resides in the secreted. In terms of biological role, has antimicrobial activity. This is Defensin-B4 from Ornithorhynchus anatinus (Duckbill platypus).